The sequence spans 558 residues: Glutamine--tRNA ligase (558 aa).

The 'HIGH' region signature appears at 34–44 (PEPNGYLHIGH). ATP-binding positions include 35-37 (EPN) and 41-47 (HIGHAKS). D67 and Y212 together coordinate L-glutamine. ATP-binding positions include T231, 261–262 (RL), and 269–271 (LSK). The short motif at 268–272 (VLSKR) is the 'KMSKS' region element.

Belongs to the class-I aminoacyl-tRNA synthetase family. In terms of assembly, monomer.

The protein resides in the cytoplasm. It carries out the reaction tRNA(Gln) + L-glutamine + ATP = L-glutaminyl-tRNA(Gln) + AMP + diphosphate. The sequence is that of Glutamine--tRNA ligase from Pseudoalteromonas atlantica (strain T6c / ATCC BAA-1087).